The primary structure comprises 500 residues: MTTDQHQEILRTEGLSKFFPGVKALDNVDFSLRRGEIMALLGENGAGKSTLIKALTGVYHADRGTIWLEGQAISPKNTAHAQQLGIGTVYQEVNLLPNMSVADNLFIGREPKRFGLLRRKEMEKRATELMASYGFSLDVREPLNRFSVAMQQIVAICRAIDLSAKVLILDEPTASLDTQEVELLFDLMRQLRDRGVSLIFVTHFLDQVYQVSDRITVLRNGSFVGCRETCELPQIELVKMMLGRELDTHALQRAGRTLLSDKPVAAFKNYGKKGTIAPFDLEVRPGEIVGLAGLLGSGRTETAEVIFGIKPADSGTALIKGKPQNLRSPHQASVLGIGFCPEDRKTDGIIAAASVRENIILALQAQRGWLRPISRKEQQEIAERFIRQLGIRTPSTEQPIEFLSGGNQQKVLLSRWLLTRPQFLILDEPTRGIDVGAHAEIIRLIETLCADGLALLVISSELEELVGYADRVIIMRDRKQVAEIPLAELSVPAIMNAIAA.

2 consecutive ABC transporter domains span residues 10 to 245 (LRTE…LGRE) and 259 to 497 (LSDK…IMNA). 42–49 (GENGAGKS) serves as a coordination point for ATP.

It belongs to the ABC transporter superfamily. As to quaternary structure, the complex is composed of two ATP-binding proteins (YtfR), two transmembrane proteins (YtfT and YjfF) and a solute-binding protein (YtfQ).

It localises to the cell inner membrane. It carries out the reaction D-galactofuranose(out) + ATP + H2O = D-galactofuranose(in) + ADP + phosphate + H(+). In terms of biological role, part of the ABC transporter complex YtfQRT-YjfF involved in galactofuranose transport. Responsible for energy coupling to the transport system. This chain is Galactofuranose transporter ATP-binding protein YtfR (ytfR), found in Escherichia coli (strain K12).